Reading from the N-terminus, the 280-residue chain is Dermonecrotic toxin LgSicTox-alphaIA1 (280 aa).

His-12 is a catalytic residue. Glu-32 and Asp-34 together coordinate Mg(2+). The active-site Nucleophile is the His-48. A disulfide bridge connects residues Cys-52 and Cys-58. Residue Asp-92 coordinates Mg(2+).

Belongs to the arthropod phospholipase D family. Class I subfamily. Mg(2+) is required as a cofactor. Expressed by the venom gland.

It is found in the secreted. It carries out the reaction an N-(acyl)-sphingosylphosphocholine = an N-(acyl)-sphingosyl-1,3-cyclic phosphate + choline. The enzyme catalyses an N-(acyl)-sphingosylphosphoethanolamine = an N-(acyl)-sphingosyl-1,3-cyclic phosphate + ethanolamine. The catalysed reaction is a 1-acyl-sn-glycero-3-phosphocholine = a 1-acyl-sn-glycero-2,3-cyclic phosphate + choline. It catalyses the reaction a 1-acyl-sn-glycero-3-phosphoethanolamine = a 1-acyl-sn-glycero-2,3-cyclic phosphate + ethanolamine. In terms of biological role, dermonecrotic toxins cleave the phosphodiester linkage between the phosphate and headgroup of certain phospholipids (sphingolipid and lysolipid substrates), forming an alcohol (often choline) and a cyclic phosphate. This toxin acts on sphingomyelin (SM). It may also act on ceramide phosphoethanolamine (CPE), lysophosphatidylcholine (LPC) and lysophosphatidylethanolamine (LPE), but not on lysophosphatidylserine (LPS), and lysophosphatidylglycerol (LPG). It acts by transphosphatidylation, releasing exclusively cyclic phosphate products as second products. Induces dermonecrosis, hemolysis, increased vascular permeability, edema, inflammatory response, and platelet aggregation. This is Dermonecrotic toxin LgSicTox-alphaIA1 from Loxosceles gaucho (Spider).